The sequence spans 1218 residues: NACHT, LRR and PYD domains-containing protein 1 allele 2 (1218 aa).

The tract at residues 1 to 61 (MEESQSKQES…SLPGWSSTSK (61 aa)) is disordered. Residues 7 to 29 (KQESNTRVAQHGSQQDVDPTFQT) are compositionally biased toward polar residues. One can recognise an NACHT domain in the interval 175–484 (QLVIIEGAAG…EFFAAMSYIL (310 aa)). 181-188 (GAAGIGKS) contributes to the ATP binding site. LRR repeat units lie at residues 343–364 (KERN…LTLC), 673–693 (NLEE…RSLC), and 730–750 (RLAE…RQLC). Over residues 799-815 (TMPTENTDGEESLTSSK) the composition is skewed to polar residues. Residues 799–842 (TMPTENTDGEESLTSSKQQQQQSGDKHMEPLGTDDDFWGPSGPV) are disordered. Residues 835–968 (FWGPSGPVST…HFAVLENPSF (134 aa)) are ZU5. Residues 835–1118 (FWGPSGPVST…LRPALPRMAS (284 aa)) enclose the FIIND domain. The segment at 969-1118 (SPMGVLLRMI…LRPALPRMAS (150 aa)) is UPA. Residues 1122 to 1211 (DAPALLHFVD…HLIMDLLEKS (90 aa)) enclose the CARD domain.

It belongs to the NLRP family. As to quaternary structure, interacts (via LRR repeats) with BCL2 and BCL2L1 (via the loop between motifs BH4 and BH3). Interacts with NOD2; this interaction is enhanced in the presence of muramyl dipeptide (MDP) and increases IL1B release. Interacts with EIF2AK2/PKR; this interaction requires EIF2AK2 activity, is accompanied by EIF2AK2 autophosphorylation and promotes inflammasome assembly in response to danger-associated signals. Interacts with MEFV; this interaction targets Nlrp1a to degradation by autophagy, hence preventing excessive IL1B- and IL18-mediated inflammation. Interacts with DPP9; leading to inhibit activation of the inflammasome. DPP9 acts via formation of a ternary complex, composed of a DPP9 homodimer, one full-length NLRP1 protein, and one cleaved C-terminus of Nlrp1a (NACHT, LRR and PYD domains-containing protein 1a, C-terminus). Interacts with DPP8; leading to inhibit activation of the inflammasome, probably via formation of a ternary complex with DPP8. Interacts with the C-terminal part of Nlrp1a (NACHT, LRR and PYD domains-containing protein 1a, C-terminus) in absence of pathogens and other damage-associated signals. In terms of assembly, interacts with the N-terminal part of Nlrp1a (NACHT, LRR and PYD domains-containing protein 1a, N-terminus) in absence of pathogens and other damage-associated signals. Homomultimer; forms the Nlrp1a inflammasome polymeric complex, a filament composed of homopolymers of this form in response to pathogens and other damage-associated signals. The Nlrp1a inflammasome polymeric complex directly recruits pro-caspase-1 (proCASP1) independently of PYCARD/ASC. Interacts (via CARD domain) with CASP1 (via CARD domain); leading to CASP1 activation. In terms of processing, autocatalytically cleaved. Autocatalytic cleavage in FIIND region occurs constitutively, prior to activation signals, and is required for inflammasome activity (IL1B release), possibly by facilitating CASP1 binding. Both N- and C-terminal parts remain associated non-covalently. (Microbial infection) Cleavage by B.anthracis lethal toxin (LT) endopeptidase promotes ubiquitination and degradation of the N-terminal part, releasing the cleaved C-terminal part of the protein (NACHT, LRR and PYD domains-containing protein 1a, C-terminus), which polymerizes and forms the Nlrp1a inflammasome. Post-translationally, ubiquitinated in response to pathogen-associated signals, leading to its degradation by the proteasome and subsequent release of the cleaved C-terminal part of the protein (NACHT, LRR and PYD domains-containing protein 1a, C-terminus), which polymerizes and forms the Nlrp1a inflammasome.

It is found in the cytoplasm. Its subcellular location is the cytosol. The protein localises to the nucleus. The protein resides in the inflammasome. Its activity is regulated as follows. Activated by cleavage by B.anthracis lethal toxin (LT) endopeptidase. Cleavage by LT promotes ubiquitination and degradation of the N-terminal part, releasing the cleaved C-terminal part of the protein (NACHT, LRR and PYD domains-containing protein 1a, C-terminus), which polymerizes and forms the Nlrp1a inflammasome. Nlrp1a inflammasome is inhibited by DPP8 and DPP9, which sequester the C-terminal fragment of Nlrp1a (NACHT, LRR and PYD domains-containing protein 1a, C-terminus) in a ternary complex, thereby preventing Nlrp1a oligomerization and activation. Nlrp1a inflammasome is weakly activated by Val-boroPro (Talabostat, PT-100), an inhibitor of dipeptidyl peptidases DPP8 and DPP9. Val-boroPro relieves inhibition of DPP8 and/or DPP9 by promoting disruption of the ternary complex, releasing its C-terminal part from autoinhibition. Weakly activated by Toxoplasma gondii. Acts as the sensor component of the Nlrp1a inflammasome, which mediates inflammasome activation in response to various pathogen-associated signals, leading to subsequent pyroptosis. Inflammasomes are supramolecular complexes that assemble in the cytosol in response to pathogens and other damage-associated signals and play critical roles in innate immunity and inflammation. Acts as a recognition receptor (PRR): recognizes specific pathogens and other damage-associated signals, such as B.anthracis lethal toxin (LT) or Val-boroPro inhibitor, and mediates the formation of the inflammasome polymeric complex. In response to pathogen-associated signals, the N-terminal part of Nlrp1a is degraded by the proteasome, releasing the cleaved C-terminal part of the protein (NACHT, LRR and PYD domains-containing protein 1a, C-terminus), which polymerizes to initiate the formation of the inflammasome complex: the inflammasome directly recruits pro-caspase-1 (proCASP1) independently of PYCARD/ASC and promotes caspase-1 (CASP1) activation, which subsequently cleaves and activates inflammatory cytokines IL1B and IL18 and gasdermin-D (GSDMD), leading to pyroptosis. In the absence of GSDMD expression, the Nlrp1a inflammasome is able to recruit and activate CASP8, leading to activation of gasdermin-E (GSDME). Its function is as follows. Constitutes the precursor of the Nlrp1a inflammasome, which mediates autoproteolytic processing within the FIIND domain to generate the N-terminal and C-terminal parts, which are associated non-covalently in absence of pathogens and other damage-associated signals. Functionally, regulatory part that prevents formation of the Nlrp1a inflammasome: in absence of pathogens and other damage-associated signals, interacts with the C-terminal part of Nlrp1a (NACHT, LRR and PYD domains-containing protein 1a, C-terminus), preventing activation of the Nlrp1a inflammasome. In response to pathogen-associated signals, this part is ubiquitinated by the N-end rule pathway and degraded by the proteasome, releasing the cleaved C-terminal part of the protein, which polymerizes and forms the Nlrp1a inflammasome. In terms of biological role, constitutes the active part of the Nlrp1a inflammasome. In absence of pathogens and other damage-associated signals, interacts with the N-terminal part of Nlrp1a (NACHT, LRR and PYD domains-containing protein 1a, N-terminus), preventing activation of the Nlrp1a inflammasome. In response to pathogen-associated signals, the N-terminal part of Nlrp1a is degraded by the proteasome, releasing this form, which polymerizes to form the Nlrp1a inflammasome complex: the Nlrp1a inflammasome complex then directly recruits pro-caspase-1 (proCASP1) and promotes caspase-1 (CASP1) activation, leading to gasdermin-D (GSDMD) cleavage and subsequent pyroptosis. This is NACHT, LRR and PYD domains-containing protein 1 allele 2 from Rattus norvegicus (Rat).